A 145-amino-acid polypeptide reads, in one-letter code: uncharacterized protein (145 aa).

A signal peptide spans 1-20 (MPSKVCTLILLFSVINQMKC).

This is an uncharacterized protein from Caenorhabditis elegans.